The sequence spans 230 residues: Ribonuclease 3 (230 aa).

Residues 10–133 (DPRLLSRIGY…IIGAIYLDSG (124 aa)) enclose the RNase III domain. Residue Glu46 coordinates Mg(2+). The active site involves Asp50. Asp119 and Glu122 together coordinate Mg(2+). Glu122 is a catalytic residue. Residues 161 to 230 (DPKSRLQEYL…AAEILKLLEQ (70 aa)) form the DRBM domain.

It belongs to the ribonuclease III family. As to quaternary structure, homodimer. Mg(2+) is required as a cofactor.

It is found in the cytoplasm. The enzyme catalyses Endonucleolytic cleavage to 5'-phosphomonoester.. Its function is as follows. Digests double-stranded RNA. Involved in the processing of primary rRNA transcript to yield the immediate precursors to the large and small rRNAs (23S and 16S). Processes some mRNAs, and tRNAs when they are encoded in the rRNA operon. Processes pre-crRNA and tracrRNA of type II CRISPR loci if present in the organism. In Acinetobacter pittii (strain PHEA-2), this protein is Ribonuclease 3 (rnc).